The primary structure comprises 426 residues: uncharacterized protein (426 aa).

Solcar repeat units lie at residues 125 to 216 (KNNV…MKRV), 226 to 315 (HSPL…LKRT), and 334 to 422 (PNGL…CKKW). 6 consecutive transmembrane segments (helical) span residues 130 to 151 (YFIS…LDRL), 193 to 213 (GINV…YEAM), 229 to 249 (LYSY…IYPV), 290 to 310 (GVLV…GTFE), 336 to 356 (GLVM…VFPL), and 394 to 415 (LYKG…SYLV).

This sequence belongs to the mitochondrial carrier (TC 2.A.29) family.

It is found in the mitochondrion inner membrane. This is an uncharacterized protein from Schizosaccharomyces pombe (strain 972 / ATCC 24843) (Fission yeast).